The chain runs to 307 residues: Dioxygenase cdmD (307 aa).

Fe cation is bound by residues His-146, Asp-148, and His-226.

Belongs to the PhyH family. In terms of assembly, homodimer. The cofactor is Fe cation.

It catalyses the reaction verruculide A + 2-oxoglutarate + O2 = chrodrimanin T + succinate + CO2. The catalysed reaction is chrodrimanin E + 2-oxoglutarate + O2 = chrodrimanin A + succinate + CO2. Its pathway is secondary metabolite biosynthesis; terpenoid biosynthesis. Functionally, dioxygenase; part of the gene cluster that mediates the biosynthesis of chrodrimanin B, a meroterpenoid that acts as a potent blocker of insect GABA-gated chloride channels. The first step of the pathway is the biosynthesis of 6-hydroxymellein by the polyketide synthase cdmE. The prenyltransferase cdmH acts as a 6-hydroxymellein 5-farnesyltransferase and produces the hydrophobic metabolite verruculide C. The FAD-dependent monooxygenase cdmI further converts verruculide C into verruculide B. The terpene cyclase cdmG then produced the pentacyclic molecule 3-hydroxypentacecilide A, the backbone structure of chrodrimanin B, via folding the farnesyl moiety of the substrate into the chair-boat conformation. The short-chain dehydrogenase/reductase cdmF functions as the 3-OH dehydrogenase that oxidizes the C-3 hydroxyl group of 3-hydroxypentacecilide A and produces chrodrimanin C, the dehydrogenated product of 3-hydroxypentacecilide A. The cytochrome P450 monooxygenase cdmJ then accepts both 3-hydroxypentacecilide A and chrodrimanin C and functions as a C-7-beta-hydroxylase to produce respectively chrodrimanin H and chrodrimanin F. The dioxygenase cdmA accepts chrodrimanin H to afford chrodrimanin E, which is further transformed to chrodrimanin A by the dioxygenase cdmD. CdmA can also accept chrodrimanin C as substrate to convert it into verruculide A, which is further converted into chrodrimanin T by cdmD. The last step of the biosynthesis is proposed to be performed by the acetyltransferase cdmC which acetylates chrodrimanin A to yield chrodrimanin B. The pathway may also lead to the production of additional shunt products, including chrodrimanins T and U. This is Dioxygenase cdmD from Talaromyces verruculosus (Penicillium verruculosum).